The chain runs to 1894 residues: Adenylate kinase 9 (1894 aa).

The segment at 32-286 (TCFIIFGKPG…LFMTVIERLK (255 aa)) is adenylate kinase 1. 41–46 (GAGKTT) lines the ATP pocket. The segment at 61–90 (EALSVLEEHIAAEKETGAMLQSLLVSGHSI) is NMP 1. 117-120 (EMPS) lines the AMP pocket. An LID 1 region spans residues 161-206 (GQRQHSTTGYVYTREQWDPEIIESRRRKKRDFPKEGKSEEEEEEEE). The segment at 188–211 (KKRDFPKEGKSEEEEEEEEQEEEE) is disordered. Acidic residues predominate over residues 198–211 (SEEEEEEEEQEEEE). Arg230 serves as a coordination point for AMP. A coiled-coil region spans residues 451-478 (IKVVQQRLLNEKQAKQQEERTLKELQVQ). The segment at 492 to 533 (SEELPSLENTGSKLSSLEIGQEDKSKSETTITGDQVKDVSTE) is disordered. Positions 651–691 (LERLQEEAQAKKREEEEIRKVKEEELRLEEEKQRLMELATK) form a coiled coil. 2 disordered regions span residues 710 to 789 (PYPD…LGSE) and 876 to 911 (EEEA…EKRR). Positions 715–736 (PDNEAEEEVEDSEIHEESEAQE) are enriched in acidic residues. Composition is skewed to basic and acidic residues over residues 757 to 768 (EGDHEPEAEFKP) and 777 to 789 (ETEK…LGSE). Positions 876–903 (EEEAEDYQAETEIDEEQEEEEEEEEEGE) are enriched in acidic residues. The adenylate kinase 2 stretch occupies residues 976-1187 (LRICLLGPHG…VAKRRAELIL (212 aa)). 985 to 990 (GSGKTV) contributes to the ATP binding site. The segment at 1005-1036 (QFDEFLQEKMLLKAERKFGPEFEDDSEEEQLV) is NMP 2. AMP-binding positions include 1034–1036 (QLV) and 1063–1066 (VQLT). The interval 1108 to 1128 (DGFPRHPEEAQFLGERGFFPD) is LID 2. Acidic residues predominate over residues 1223-1241 (EFPKDEEEMSEEDEEQEAD). The disordered stretch occupies residues 1223–1243 (EFPKDEEEMSEEDEEQEADAT). Residues 1395–1584 (VRIMIVGPPK…VWNEVLKDIQ (190 aa)) are adenylate kinase 3. 1404-1409 (KSGKTT) contacts ATP. An NMP 3 region spans residues 1424–1455 (SVGDALRGMLNNHPDSELSLMLNWHLHKGKTV). AMP-binding positions include Arg1430, 1482 to 1485 (GYPV), and Gln1489. The LID 3 stretch occupies residues 1519–1533 (LEKKTEQSMSYPLHN).

This sequence belongs to the adenylate kinase family. As to expression, highly expressed in the testis.

The protein localises to the cytoplasm. It is found in the nucleus. Its subcellular location is the cell projection. It localises to the cilium. The protein resides in the flagellum. The catalysed reaction is a ribonucleoside 5'-phosphate + ATP = a ribonucleoside 5'-diphosphate + ADP. It carries out the reaction AMP + ATP = 2 ADP. It catalyses the reaction GTP + AMP = GDP + ADP. The enzyme catalyses CMP + ATP = CDP + ADP. The catalysed reaction is GTP + CMP = CDP + GDP. It carries out the reaction dAMP + ATP = dADP + ADP. It catalyses the reaction dCMP + ATP = dCDP + ADP. The enzyme catalyses a ribonucleoside 5'-diphosphate + ATP = a ribonucleoside 5'-triphosphate + ADP. The catalysed reaction is CDP + ATP = CTP + ADP. It carries out the reaction CDP + GTP = CTP + GDP. It catalyses the reaction GDP + ATP = GTP + ADP. The enzyme catalyses UDP + ATP = UTP + ADP. The catalysed reaction is GTP + UDP = UTP + GDP. It carries out the reaction dTDP + GTP = dTTP + GDP. It catalyses the reaction dCDP + ATP = dCTP + ADP. The enzyme catalyses dCDP + GTP = dCTP + GDP. The catalysed reaction is dGDP + ATP = dGTP + ADP. It carries out the reaction dTDP + ATP = dTTP + ADP. It catalyses the reaction dADP + GTP = dATP + GDP. Functionally, broad-specificity nucleoside phosphate kinase involved in cellular nucleotide homeostasis by catalyzing nucleoside-phosphate interconversions. Similar to other adenylate kinases, preferentially catalyzes the phosphorylation of the nucleoside monophosphate AMP with ATP as phosphate donor to produce ADP. In vitro, can also catalyze the phosphorylation of CMP, dAMP and dCMP and use GTP as an alternate phosphate donor. Moreover, exhibits a diphosphate kinase activity, producing ATP, CTP, GTP, UTP, TTP, dATP, dCTP and dGTP from the corresponding diphosphate substrates with either ATP or GTP as phosphate donors. For this activity shows the following substrate preference CDP &gt; UDP &gt; ADP &gt; TDP. This chain is Adenylate kinase 9, found in Mus musculus (Mouse).